The primary structure comprises 335 residues: MFVDQITLELRAGKGGNGVVAWRKEKYLPKGGPYGGNGGNGGSVIIEATTSVYSFEAYRNIRFLKAPDGQSGATNNRTGRSGKDLIVSVPTGTLLRDAETGEILHDFTVDGERLLVSQGGKGGKGNTFFKTSVNRAPTKATPGKPGEIRQVELELKLIADIGLVGFPNAGKSTLFNTLAHTEVKVGAYPFTTLAPSLGLVLCKDRLYQKPWIIADIPGIIEGAHQNKGLGLDFLRHIERTLLLLFVIDVSKRERNSPEEDLETLIHELHSHQPDFEKKDMLVALNKIDDLLPDEQEECLQSFQKRFPSYTFVLISGLTGEGVDGLYRFFTQRLAV.

The region spanning 1 to 158 (MFVDQITLEL…RQVELELKLI (158 aa)) is the Obg domain. Residues 126 to 145 (NTFFKTSVNRAPTKATPGKP) are disordered. The 176-residue stretch at 159–334 (ADIGLVGFPN…LYRFFTQRLA (176 aa)) folds into the OBG-type G domain. Residues 165-172 (GFPNAGKS), 190-194 (FTTLA), 215-218 (DIPG), 285-288 (NKID), and 315-317 (SGL) contribute to the GTP site. The Mg(2+) site is built by serine 172 and threonine 192.

This sequence belongs to the TRAFAC class OBG-HflX-like GTPase superfamily. OBG GTPase family. In terms of assembly, monomer. Mg(2+) serves as cofactor.

Its subcellular location is the cytoplasm. An essential GTPase which binds GTP, GDP and possibly (p)ppGpp with moderate affinity, with high nucleotide exchange rates and a fairly low GTP hydrolysis rate. Plays a role in control of the cell cycle, stress response, ribosome biogenesis and in those bacteria that undergo differentiation, in morphogenesis control. This is GTPase Obg from Chlamydia pneumoniae (Chlamydophila pneumoniae).